A 411-amino-acid chain; its full sequence is Multidrug resistance protein MdtG (411 aa).

11 helical membrane passes run 17–37 (LFVA…VMPF), 59–79 (LVFS…GGLA), 92–112 (ALGM…WQFL), 116–136 (AVLG…ATQV), 147–167 (WLST…GLLA), 174–194 (PVFF…LFAV), 222–242 (VLTL…IAPI), 257–277 (LAFV…ISAP), 291–311 (ILVA…MVQN), 320–340 (FLLG…LIYN), and 379–399 (AVFV…WITL).

This sequence belongs to the major facilitator superfamily. DHA1 family. MdtG (TC 2.A.1.2.20) subfamily.

It localises to the cell inner membrane. This Erwinia billingiae (strain Eb661) protein is Multidrug resistance protein MdtG.